Consider the following 82-residue polypeptide: Protein RALF-like 8 (82 aa).

Positions 1-28 are cleaved as a signal peptide; sequence MGMSKSIKVILSLALVVFLALAGTKVEA. 2 disulfide bridges follow: cysteine 47–cysteine 55 and cysteine 67–cysteine 73.

The protein belongs to the plant rapid alkalinization factor (RALF) family. Expressed in leaves and flowers.

It is found in the secreted. In terms of biological role, cell signaling peptide that may regulate plant stress, growth, and development. Mediates a rapid alkalinization of extracellular space by mediating a transient increase in the cytoplasmic Ca(2+) concentration leading to a calcium-dependent signaling events through a cell surface receptor and a concomitant activation of some intracellular mitogen-activated protein kinases. The sequence is that of Protein RALF-like 8 (RALFL8) from Arabidopsis thaliana (Mouse-ear cress).